The following is a 106-amino-acid chain: MTGTGKTVTRVDLCEAVYKKVGLSRTESSAFVELVLKEITDCLEKGETVKLSSFGSFMVRKKGQRIGRNPKTGTEVPISPRRVMVFKPSAILKQRINSNGAGGKTD.

This sequence belongs to the bacterial histone-like protein family. As to quaternary structure, heterodimer of an alpha and a beta chain.

Its function is as follows. This protein is one of the two subunits of integration host factor, a specific DNA-binding protein that functions in genetic recombination as well as in transcriptional and translational control. The sequence is that of Integration host factor subunit alpha from Nitrobacter winogradskyi (strain ATCC 25391 / DSM 10237 / CIP 104748 / NCIMB 11846 / Nb-255).